Here is a 148-residue protein sequence, read N- to C-terminus: NADPH-dependent 7-cyano-7-deazaguanine reductase (148 aa).

The Thioimide intermediate role is filled by Cys-50. Asp-57 (proton donor) is an active-site residue. Substrate-binding positions include 72–74 (VES) and 91–92 (HE).

It belongs to the GTP cyclohydrolase I family. QueF type 1 subfamily.

It is found in the cytoplasm. It catalyses the reaction 7-aminomethyl-7-carbaguanine + 2 NADP(+) = 7-cyano-7-deazaguanine + 2 NADPH + 3 H(+). It functions in the pathway tRNA modification; tRNA-queuosine biosynthesis. Functionally, catalyzes the NADPH-dependent reduction of 7-cyano-7-deazaguanine (preQ0) to 7-aminomethyl-7-deazaguanine (preQ1). The protein is NADPH-dependent 7-cyano-7-deazaguanine reductase of Helicobacter pylori (strain ATCC 700392 / 26695) (Campylobacter pylori).